The sequence spans 216 residues: Serine/threonine-protein phosphatase 1 (216 aa).

The Mn(2+) site is built by D24, H26, D53, and N79. The active-site Proton donor is H80. H185 serves as a coordination point for Mn(2+).

It belongs to the PPP phosphatase family. PP-1 subfamily. The cofactor is Mn(2+).

The enzyme catalyses O-phospho-L-seryl-[protein] + H2O = L-seryl-[protein] + phosphate. It carries out the reaction O-phospho-L-threonyl-[protein] + H2O = L-threonyl-[protein] + phosphate. With respect to regulation, inhibited by cadmium, copper, zinc when added cobalt when added concomitantly with manganese. In terms of biological role, can hydrolyze phosphorylated Ser-, Thr- or Tyr-substrates in vitro. The natural substrate is unknown. This chain is Serine/threonine-protein phosphatase 1 (pphA), found in Salmonella typhimurium (strain LT2 / SGSC1412 / ATCC 700720).